Reading from the N-terminus, the 544-residue chain is Chaperonin GroEL (544 aa).

ATP is bound by residues 29–32 (TLGP), 86–90 (DGTTT), G413, 476–478 (NAA), and D492.

This sequence belongs to the chaperonin (HSP60) family. As to quaternary structure, forms a cylinder of 14 subunits composed of two heptameric rings stacked back-to-back. Interacts with the co-chaperonin GroES.

It localises to the cytoplasm. The enzyme catalyses ATP + H2O + a folded polypeptide = ADP + phosphate + an unfolded polypeptide.. In terms of biological role, together with its co-chaperonin GroES, plays an essential role in assisting protein folding. The GroEL-GroES system forms a nano-cage that allows encapsulation of the non-native substrate proteins and provides a physical environment optimized to promote and accelerate protein folding. This Bacillus mycoides (strain KBAB4) (Bacillus weihenstephanensis) protein is Chaperonin GroEL.